An 822-amino-acid chain; its full sequence is Protein smoothened (822 aa).

The first 28 residues, 1-28, serve as a signal peptide directing secretion; the sequence is MSSKRPCSIVGSFWMLWIWTATSMVARA. Residues 29 to 212 lie on the Extracellular side of the membrane; it reads VILHPNETIF…EDEHSDMHSY (184 aa). Asn34 carries N-linked (GlcNAc...) asparagine glycosylation. 5 disulfides stabilise this stretch: Cys42-Cys157, Cys48-Cys112, Cys56-Cys105, Cys96-Cys132, and Cys125-Cys147. The 118-residue stretch at 43-160 folds into the FZ domain; that stretch reads KKSTTCEVLK…EQFPKGCQNE (118 aa). Asp73 is a binding site for cholesterol. Residue Asn167 is glycosylated (N-linked (GlcNAc...) asparagine). Cystine bridges form between Cys172-Cys192, Cys196-Cys274, and Cys293-Cys369. A helical transmembrane segment spans residues 213 to 233; the sequence is IAVFGTITLLCTFFTLATFLA. Over 234 to 241 the chain is Cytoplasmic; it reads DWKNSNRY. The helical transmembrane segment at 242-262 threads the bilayer; the sequence is PAVILFYVNACFFIGSIGWLA. Over 263-293 the chain is Extracellular; that stretch reads QFMDGARNEIVCKSDNTMRLGEPSSTETLSC. The helical transmembrane segment at 294–314 threads the bilayer; the sequence is VIIFVIVYYSLMSGVIWFVML. The Cytoplasmic portion of the chain corresponds to 315–335; sequence TYAWHTSFKALGTTHQPLSGK. A helical membrane pass occupies residues 336–356; it reads TSYFHLVTWSIPFILTVAILA. Topologically, residues 357-381 are extracellular; sequence NSQVDADSVSGICFVGYRYYEYRAG. Position 373 (Tyr373) interacts with cholesterol. The helical transmembrane segment at 382 to 402 threads the bilayer; it reads FVLAPIGFVLVIGGYFLIRGV. The Cytoplasmic segment spans residues 403–430; it reads MTLFSIKSNHPGLLSEKAASKINETMLR. The chain crosses the membrane as a helical span at residues 431–451; it reads LGIFGFLAFGFVLITFGCHFY. The Extracellular segment spans residues 452-503; that stretch reads DFFNQAEWERSFREYVLCEANVTIAHQTNKPIPECAIKNRPSLLVGKINLFS. Cys469 and Cys486 are oxidised to a cystine. The N-linked (GlcNAc...) asparagine glycan is linked to Asn472. The helical transmembrane segment at 504–524 threads the bilayer; the sequence is MFGTGIAMSTWVWTKATILIW. Residues 525-822 are Cytoplasmic-facing; it reads KRTWFRIIGR…AELLDADSDF (298 aa). A disordered region spans residues 645–687; that stretch reads MMKRKKKKKKRRKEVRPAGPAADEGNPAYHRREFGPSAVPRLP. Residues 647–658 show a composition bias toward basic residues; that stretch reads KRKKKKKKRRKE.

The protein belongs to the G-protein coupled receptor Fz/Smo family. In terms of assembly, monomer.

The protein localises to the cell membrane. It is found in the cell projection. The protein resides in the cilium. In terms of biological role, g protein-coupled receptor which associates with the patched protein (ptch) to transduce Hedgehog protein signaling. Binding of sonic hedgehog (shh) to its receptor patched prevents inhibition of smoothened (smo) by patched. When active, smo binds to and sequesters protein kinase A catalytic subunit prkaca at the cell membrane, preventing prkaca-mediated phosphorylation of gli transcription factors which releases the gli proteins from prkaca-mediated inhibition and allows for transcriptional activation of Hedgehog signaling pathway target genes. Required for the development of primary and secondary motoneurons but not for the specification of midbrain dopaminergic neurons or development of the medial floor plate. Required for induction of lateral floor plate and posterior motoneurons, anterior neural plate patterning, dorsoventral forebrain patterning, dorsoventral retinal patterning, optic stalk development, and formation of the forebrain primary axonal scaffold. Required to regulate the formation of a subset of cerebellar neurons by limiting wnt1 expression which controls cerebellar expression of transcription factor olig2. Required for development of the pancreas. Required for muscle development. Required for the formation of a single continuous intestinal lumen from multiple discontinuous lumens, probably by regulating remodeling through rab11a-mediated trafficking to facilitate lumen fusion. Required for development of the adenohypophysis. Required for anteroposterior patterning of the otic vesicle. Required for development of the anterior craniofacial skeleton. Required for patterning of the caudal fin. Required during gastrulation and early somitogenesis stages to promote cardiomyocyte formation by regulating the specification of myocardial progenitors. Required for induction of arterial endothelial cell formation by repressing venous cell fate. The sequence is that of Protein smoothened from Danio rerio (Zebrafish).